The chain runs to 141 residues: Hemoglobin subunit alpha (141 aa).

The region spanning 1–141 (VLSANDKTNV…VSTVLTSKYR (141 aa)) is the Globin domain. Ser-3 bears the Phosphoserine mark. Lys-7 carries the N6-succinyllysine modification. The residue at position 8 (Thr-8) is a Phosphothreonine. Residue Lys-11 is modified to N6-succinyllysine. Lys-16 is subject to N6-acetyllysine; alternate. Lys-16 carries the N6-succinyllysine; alternate modification. Tyr-24 is modified (phosphotyrosine). The residue at position 35 (Ser-35) is a Phosphoserine. Lys-40 is modified (N6-succinyllysine). Ser-49 carries the post-translational modification Phosphoserine. Gln-58 provides a ligand contact to O2. Position 87 (His-87) interacts with heme b. The residue at position 108 (Thr-108) is a Phosphothreonine. Ser-124 and Ser-131 each carry phosphoserine. 2 positions are modified to phosphothreonine: Thr-134 and Thr-137. Ser-138 carries the phosphoserine modification.

This sequence belongs to the globin family. In terms of assembly, heterotetramer of two alpha chains and two beta chains. As to expression, red blood cells.

In terms of biological role, involved in oxygen transport from the lung to the various peripheral tissues. Hemopressin acts as an antagonist peptide of the cannabinoid receptor CNR1. Hemopressin-binding efficiently blocks cannabinoid receptor CNR1 and subsequent signaling. This chain is Hemoglobin subunit alpha (HBA), found in Didelphis virginiana (North American opossum).